The following is a 79-amino-acid chain: MASSRFQLVALLVVFSLVISITANSVEKDVMDGPCRLRGTCNNDGDCDKHCHRSTDAAAMDGHCLFDKPTGPVCCCLFD.

The signal sequence occupies residues Met-1–Ala-23. Intrachain disulfides connect Cys-35/Cys-76, Cys-41/Cys-64, Cys-47/Cys-74, and Cys-51/Cys-75.

The protein belongs to the DEFL family.

The protein localises to the secreted. This chain is Putative defensin-like protein 274, found in Arabidopsis thaliana (Mouse-ear cress).